A 166-amino-acid chain; its full sequence is PTS system glucose-specific EIIA component (166 aa).

The region spanning 36–140 (DVVFSEKIVG…SVLTPIVISN (105 aa)) is the PTS EIIA type-1 domain. Zn(2+) is bound by residues His-73 and His-88. His-88 acts as the Tele-phosphohistidine intermediate; for EIIA activity in catalysis. His-88 is modified (phosphohistidine; by HPr).

As to quaternary structure, heterodimer with glycerol kinase (glpk). Requires Zn(2+) as cofactor.

It is found in the cytoplasm. In terms of biological role, the phosphoenolpyruvate-dependent sugar phosphotransferase system (sugar PTS), a major carbohydrate active transport system, catalyzes the phosphorylation of incoming sugar substrates concomitantly with their translocation across the cell membrane. The enzyme II complex composed of PtsG and Crr is involved in glucose transport. In Haemophilus influenzae (strain ATCC 51907 / DSM 11121 / KW20 / Rd), this protein is PTS system glucose-specific EIIA component (crr).